The chain runs to 453 residues: Ribulose bisphosphate carboxylase large chain (453 aa).

The propeptide occupies 1–2 (MS). Residue proline 3 is modified to N-acetylproline. Lysine 14 is subject to N6,N6,N6-trimethyllysine. Substrate-binding residues include asparagine 123 and threonine 173. The Proton acceptor role is filled by lysine 175. Residue lysine 177 participates in substrate binding. Mg(2+) contacts are provided by lysine 201, aspartate 203, and glutamate 204. Lysine 201 carries the N6-carboxylysine modification. Histidine 294 (proton acceptor) is an active-site residue. The substrate site is built by arginine 295, histidine 327, and serine 379.

Belongs to the RuBisCO large chain family. Type I subfamily. Heterohexadecamer of 8 large chains and 8 small chains; disulfide-linked. The disulfide link is formed within the large subunit homodimers. Requires Mg(2+) as cofactor. The disulfide bond which can form in the large chain dimeric partners within the hexadecamer appears to be associated with oxidative stress and protein turnover.

It localises to the plastid. The protein resides in the chloroplast. The enzyme catalyses 2 (2R)-3-phosphoglycerate + 2 H(+) = D-ribulose 1,5-bisphosphate + CO2 + H2O. It carries out the reaction D-ribulose 1,5-bisphosphate + O2 = 2-phosphoglycolate + (2R)-3-phosphoglycerate + 2 H(+). RuBisCO catalyzes two reactions: the carboxylation of D-ribulose 1,5-bisphosphate, the primary event in carbon dioxide fixation, as well as the oxidative fragmentation of the pentose substrate in the photorespiration process. Both reactions occur simultaneously and in competition at the same active site. This chain is Ribulose bisphosphate carboxylase large chain, found in Cruciata glabra (Slender crosswort).